A 49-amino-acid chain; its full sequence is Putative exported peptide YydF (49 aa).

In terms of biological role, suggested to be the precursor for an exported, modified peptide that has antimicrobial and/or signaling properties. Synthesis requires YydG and YydH; the peptide is proposed to be exported by the YydIJ transporter. In the absence of the transporter, the modified peptide activates the LiaRS two-component regulatory system, possibly by eliciting cell envelope stress. This activation can occur in trans in cocultured cells lacking either the transporter or the whole operon. The polypeptide is Putative exported peptide YydF (yydF) (Bacillus subtilis (strain 168)).